The primary structure comprises 187 residues: Probable DNA-directed RNA polymerase subunit delta (187 aa).

Positions 14–81 (LSMIEVAHAL…GNNVWALRSW (68 aa)) constitute an HTH HARE-type domain. The disordered stretch occupies residues 96 to 187 (EIEDEEEEKP…EDDSDDTDED (92 aa)). Acidic residues-rich tracts occupy residues 117–149 (IEDE…EDKD) and 157–187 (ELAE…TDED).

Belongs to the RpoE family. In terms of assembly, RNAP is composed of a core of 2 alpha, a beta and a beta' subunits. The core is associated with a delta subunit and one of several sigma factors.

Participates in both the initiation and recycling phases of transcription. In the presence of the delta subunit, RNAP displays an increased specificity of transcription, a decreased affinity for nucleic acids, and an increased efficiency of RNA synthesis because of enhanced recycling. This Lactococcus lactis subsp. cremoris (strain SK11) protein is Probable DNA-directed RNA polymerase subunit delta.